The primary structure comprises 64 residues: Large ribosomal subunit protein eL37 (64 aa).

Zn(2+)-binding residues include Cys20, Cys23, Cys35, and Cys38. Residues 20 to 38 form a C4-type zinc finger; that stretch reads CRRCGRRAYHVRKKACAAC.

Belongs to the eukaryotic ribosomal protein eL37 family. It depends on Zn(2+) as a cofactor.

Functionally, binds to the 23S rRNA. This is Large ribosomal subunit protein eL37 from Methanococcus vannielii (strain ATCC 35089 / DSM 1224 / JCM 13029 / OCM 148 / SB).